Consider the following 259-residue polypeptide: Pycsar effector protein RsmPycTIR (259 aa).

Residue 1–120 participates in a nucleoside 3',5'-cyclic phosphate binding; sequence MVGGDEVIAN…RRVHEDFSGR (120 aa). A TIR-like region spans residues 126–229; sequence LATGISRRTS…AEFQYQISSS (104 aa). 3 helical membrane passes run 136-156, 169-189, and 234-254; these read GWNW…AIWY, VLLP…ADPV, and QATA…LFWI.

Its subcellular location is the cell inner membrane. It catalyses the reaction NAD(+) + H2O = ADP-D-ribose + nicotinamide + H(+). In terms of biological role, pycsar (pyrimidine cyclase system for antiphage resistance) provides immunity against bacteriophage. The pyrimidine cyclase (PycC) synthesizes cyclic nucleotides in response to infection; these serve as specific second messenger signals. The signals activate the adjacent effector, leading to bacterial cell death and abortive phage infection. A clade B Pycsar system. Its function is as follows. The effector gene of a two-gene Pycsar system. Expression of this and adjacent uridylate cyclase RsmPycC (AC A0A1V0HUX5) probably confers resistance to bacteriophage. The genes are probably only expressed in response to bacteriophage infection. Probably only responds to cUMP (produced by its cognate NTP cyclase), it may act by degrading NAD(+) and/or by impairing membrane integrity. In Rhodovulum sp. (strain MB263), this protein is Pycsar effector protein RsmPycTIR.